A 72-amino-acid polypeptide reads, in one-letter code: Translation initiation factor IF-1 (72 aa).

The S1-like domain occupies 1-72 (MAKDDVIEID…DKGRITYRYK (72 aa)).

Belongs to the IF-1 family. Component of the 30S ribosomal translation pre-initiation complex which assembles on the 30S ribosome in the order IF-2 and IF-3, IF-1 and N-formylmethionyl-tRNA(fMet); mRNA recruitment can occur at any time during PIC assembly.

The protein localises to the cytoplasm. Its function is as follows. One of the essential components for the initiation of protein synthesis. Stabilizes the binding of IF-2 and IF-3 on the 30S subunit to which N-formylmethionyl-tRNA(fMet) subsequently binds. Helps modulate mRNA selection, yielding the 30S pre-initiation complex (PIC). Upon addition of the 50S ribosomal subunit IF-1, IF-2 and IF-3 are released leaving the mature 70S translation initiation complex. The sequence is that of Translation initiation factor IF-1 from Campylobacter fetus subsp. fetus (strain 82-40).